Consider the following 119-residue polypeptide: Large ribosomal subunit protein bL20 (119 aa).

This sequence belongs to the bacterial ribosomal protein bL20 family.

Functionally, binds directly to 23S ribosomal RNA and is necessary for the in vitro assembly process of the 50S ribosomal subunit. It is not involved in the protein synthesizing functions of that subunit. This Buchnera aphidicola subsp. Cinara cedri (strain Cc) protein is Large ribosomal subunit protein bL20.